We begin with the raw amino-acid sequence, 158 residues long: UPF0336 protein Mb0654 (158 aa).

Belongs to the UPF0336 family.

The protein is UPF0336 protein Mb0654 of Mycobacterium bovis (strain ATCC BAA-935 / AF2122/97).